The chain runs to 434 residues: Glutamate-1-semialdehyde 2,1-aminomutase 1 (434 aa).

At lysine 270 the chain carries N6-(pyridoxal phosphate)lysine.

Belongs to the class-III pyridoxal-phosphate-dependent aminotransferase family. HemL subfamily. As to quaternary structure, homodimer. Requires pyridoxal 5'-phosphate as cofactor.

It is found in the cytoplasm. The catalysed reaction is (S)-4-amino-5-oxopentanoate = 5-aminolevulinate. It functions in the pathway porphyrin-containing compound metabolism; protoporphyrin-IX biosynthesis; 5-aminolevulinate from L-glutamyl-tRNA(Glu): step 2/2. The protein is Glutamate-1-semialdehyde 2,1-aminomutase 1 of Bacillus cereus (strain ATCC 10987 / NRS 248).